A 322-amino-acid polypeptide reads, in one-letter code: HPr kinase/phosphorylase (322 aa).

Active-site residues include His146 and Lys167. 161–168 (GDSGLGKS) lines the ATP pocket. Ser168 lines the Mg(2+) pocket. Catalysis depends on Asp185, which acts as the Proton acceptor; for phosphorylation activity. Proton donor; for dephosphorylation activity. The tract at residues 209-218 (LEVRGLGLLD) is important for the catalytic mechanism of both phosphorylation and dephosphorylation. Residue Glu210 participates in Mg(2+) binding. Residue Arg250 is part of the active site. The tract at residues 271-276 (QVAAGR) is important for the catalytic mechanism of dephosphorylation.

Belongs to the HPrK/P family. As to quaternary structure, homohexamer. Requires Mg(2+) as cofactor.

It carries out the reaction [HPr protein]-L-serine + ATP = [HPr protein]-O-phospho-L-serine + ADP + H(+). The enzyme catalyses [HPr protein]-O-phospho-L-serine + phosphate + H(+) = [HPr protein]-L-serine + diphosphate. Catalyzes the ATP- as well as the pyrophosphate-dependent phosphorylation of a specific serine residue in HPr, a phosphocarrier protein of the phosphoenolpyruvate-dependent sugar phosphotransferase system (PTS). HprK/P also catalyzes the pyrophosphate-producing, inorganic phosphate-dependent dephosphorylation (phosphorolysis) of seryl-phosphorylated HPr (P-Ser-HPr). The polypeptide is HPr kinase/phosphorylase (Burkholderia multivorans (strain ATCC 17616 / 249)).